Here is a 65-residue protein sequence, read N- to C-terminus: Metallothionein-like protein type 3 (65 aa).

This sequence belongs to the metallothionein superfamily. Type 15 family.

Its function is as follows. Metallothioneins have a high content of cysteine residues that bind various heavy metals. The chain is Metallothionein-like protein type 3 from Musa acuminata (Banana).